A 251-amino-acid chain; its full sequence is Cell division protein ZapD (251 aa).

Belongs to the ZapD family. Interacts with FtsZ.

The protein localises to the cytoplasm. In terms of biological role, cell division factor that enhances FtsZ-ring assembly. Directly interacts with FtsZ and promotes bundling of FtsZ protofilaments, with a reduction in FtsZ GTPase activity. The chain is Cell division protein ZapD from Burkholderia vietnamiensis (strain G4 / LMG 22486) (Burkholderia cepacia (strain R1808)).